The following is a 254-amino-acid chain: Dihydroorotate dehydrogenase B (NAD(+)), electron transfer subunit (254 aa).

The FAD-binding FR-type domain maps to 1 to 99 (MLQTEMKVIQ…LGPLGKGFDI (99 aa)). Residues 50 to 53 (RPIS), 67 to 69 (LYR), and 74 to 75 (GT) contribute to the FAD site. Cys218, Cys223, Cys226, and Cys241 together coordinate [2Fe-2S] cluster.

It belongs to the PyrK family. As to quaternary structure, heterotetramer of 2 PyrK and 2 PyrD type B subunits. It depends on [2Fe-2S] cluster as a cofactor. FAD serves as cofactor.

Its pathway is pyrimidine metabolism; UMP biosynthesis via de novo pathway; orotate from (S)-dihydroorotate (NAD(+) route): step 1/1. Functionally, responsible for channeling the electrons from the oxidation of dihydroorotate from the FMN redox center in the PyrD type B subunit to the ultimate electron acceptor NAD(+). This chain is Dihydroorotate dehydrogenase B (NAD(+)), electron transfer subunit, found in Listeria welshimeri serovar 6b (strain ATCC 35897 / DSM 20650 / CCUG 15529 / CIP 8149 / NCTC 11857 / SLCC 5334 / V8).